Consider the following 2898-residue polypeptide: MDLSRRLCSTALVAFIVLASIHDSQSRFPGLRQKRQYGANMYLPESSVTPGGEGNDPDEWTPWSSPSDCSRTCGGGVSYQTRECLRRDDRGEAVCSGGSRRYFSCNTQDCPEEESDFRAQQCSRFDRQQFDGVFYEWVPYTNAPNPCELNCMPKGERFYYRQREKVVDGTRCNDKDLDVCVNGECMPVGCDMMLGSDAKEDKCRKCGGDGSTCKTIRNTITTKDLAPGYNDLLLLPEGATNIRIEETVPSSNYLACRNHSGHYYLNGDWRIDFPRPMFFANSWWNYQRKPMGFAAPDQLTCSGPISESLFIVMLVQEKNISLDYEYSIPESLSHSQQDTHTWTHHQFNACSASCGGGSQSRKVTCNNRITLAEVNPSLCDQKSKPVEEQACGTEPCAPHWVEGEWSKCSKGCGSDGFQNRSITCERISSSGEHTVEEDAVCLKEVGNKPATKQECNRDVKNCPKYHLGPWTPCDKLCGDGKQTRKVTCFIEENGHKRVLPEEDCVEEKPETEKSCLLTPCEGVDWIISQWSGCNACGQNTETRTAICGNKEGKVYPEEFCEPEVPTLSRPCKSPKCEAQWFSSEWSKCSAPCGKGVKSRIVICGEFDGKTVTPADDDSKCNKETKPESEQDCEGEEKVCPGEWFTGPWGKCSKPCGGGERVREVLCLSNGTKSVNCDEEKVEPLSEKCNSEACTEDEILPLTSTDKPIEDDEEDCDEDGIELISDGLSDDEKSEDVIDLEGTAKTETTPEAEDLMQSDSPTPYDEFESTGTTFEGSGYDSESTTDSGISTEGSGDDEETSEASTDLSSSTDSGSTSSDSTSSDSSSSISSDATSEAPASSVSDSSDSTDASTETTGVSDDSTDVSSSTEASASESTDVSGASDSTGSTNASDSTPESSTEASSSTDDSTDSSDNSSNVSESSTEASSSSVSDSNDSSDGSTDGVSSTTENSSDSTSDATSDSTASSDSTDSTSDQTTETTPESSTDSTESSTLDASSTTDASSTSESSSESSTDGSSTTSNSASSETTGLSSDGSTTDATTAASDNTDITTDGSTDESTDGSSNASTEGSTEGASEDTTISTESSGSTESTDAIASDGSTTEGSTVEDLSSSTSSDVTSDSTITDSSPSTEVSGSTDSSSSTDGSSTDASSTEASSTDVTESTDSTVSGGTSDTTESGPTEESTTEGSTESTTEGSTDSTQSTDLDSTTSDIWSTSDKDDESESSTPYSFDSEVTKSKPRKCKPKKSTCAKSEYGCCPDGKSTPKGPFDEGCPIAKTCADTKYGCCLDGVSPAKGKNNKGCPKSQCAETLFGCCPDKFTAADGENDEGCPETTTVPPTTTTEETQPETTTEIEGSGQDSTTSEPDTKKSCSFSEFGCCPDAETSAKGPDFEGCGLASPVAKGCAESENGCCPDGQTPASGPNGEGCSGCTRERFGCCPDSQTPAHGPNKEGCCLDTQFGCCPDNILAARGPNNEGCECHYTPYGCCPDNKSAATGYNQEGCACETTQYGCCPDKITAAKGPKHEGCPCETTQFGCCPDGLTFAKGPHHHGCHCTQTEFKCCDDEKTPAKGPNGDGCTCVESKFGCCPDGVTKATDEKFGGCENVQEPPQKACGLPKETGTCNNYSVKYYFDTSYGGCARFWYGGCDGNDNRFESEAECKDTCQDYTGKHVCLLPKSAGPCTGFTKKWYFDVDRNRCEEFQYGGCYGTNNRFDSLEQCQGTCAASENLPTCEQPVESGPCAGNFERWYYDNETDICRPFTYGGCKGNKNNYPTEHACNYNCRQPGVLKDRCALPKQTGDCSEKLAKWHFSESEKRCVPFYYSGCGGNKNNFPTLESCEDHCPRQVAKDICEIPAEVGECANYVTSWYYDTQDQACRQFYYGGCGGNENRFPTEESCLARCDRKPEPTTTTPATRPQPSRQDVCDEEPAPGECSTWVLKWHFDRKIGACRQFYYGNCGGNGNRFETENDCQQRCLSQEPPAPTPPRAPAPTRQPDPAPTVAQCSQPADPGQCDKWALHWNYNETEGRCQSFYYGGCGGNDNRFATEEECSARCSVNIDIRIGADPVEHDTSKCFLAFEPGNCYNNVTRWFYNSAEGLCDEFVYTGCGGNANNYATEEECQNECNDAQTTCALPPVRGRCSDLSRRWYFDERSGECHEFEFTGCRGNRNNFVSQSDCLNFCIGEPVVEPSAPTYSVCAEPPEAGECDNRTTAWFYDSENMACTAFTYTGCGGNGNRFETRDQCERQCGEFKGVDVCNEPVTTGPCTDWQTKYYFNTASQACEPFTYGGCDGTGNRFSDLFECQTVCLAGREPRVGSAKEICLLPVATGRCNGPSVHERRWYYDDEAGNCVSFIYAGCSGNQNNFRSFEACTNQCRPEPNKQDNEIGQNPCDTFDAECQELRCPYGVRRVAARSQPECTQCICENPCEGYSCPEGQQCAIDVASSDDRQFAPVCRDIYKPGECPALSANASGCARECYTDADCRGDNKCCSDGCGQLCVHPARPTQPPRTQAPVVSYPGDARAALEPKEAHELDVQTAIGGIAVLRCFATGNPAPNITWSLKNLVINTNKGRYVLTANGDLTIVQVRQTDDGTYVCVASNGLGEPVRREVALQVTEPVSQPAYIYGDKNVTQIVELNRPAVIRCPAGGFPEPHVSWWRNGQMFGLKNNLMARDYSLVFNSIQLSDLGLYTCEVYNQRRPVSLRVTLKAVGPVRPLSPEEEQYMQYVLNPATRPVTQRPSYPYRPTRPAYVPEPTVNVHAVLALEPKNSYTPGSTIVMSCSVQGYPEPNVTWIKDDVPLYNNERVQITYQPHRLVLSDVTSADSGKYTCRASNAYTYANGEANVSIQSVVPVSPECVDNPYFANCKLIVKGRYCSNPYYTQFCCRSCTLAGQVASPPLHPNAV.

The first 26 residues, 1-26 (MDLSRRLCSTALVAFIVLASIHDSQS), serve as a signal peptide directing secretion. Residues 43–67 (LPESSVTPGGEGNDPDEWTPWSSPS) form a disordered region. A TSP type-1 1 domain is found at 57–111 (PDEWTPWSSPSDCSRTCGGGVSYQTRECLRRDDRGEAVCSGGSRRYFSCNTQDCP). 3 disulfide bridges follow: cysteine 69–cysteine 105, cysteine 73–cysteine 110, and cysteine 84–cysteine 95. Asparagine 258 and asparagine 319 each carry an N-linked (GlcNAc...) asparagine glycan. The 60-residue stretch at 338–397 (DTHTWTHHQFNACSASCGGGSQSRKVTCNNRITLAEVNPSLCDQKSKPVEEQACGTEPCA) folds into the TSP type-1 2 domain. The N-linked (GlcNAc...) asparagine glycan is linked to asparagine 419. 4 consecutive TSP type-1 domains span residues 461 to 521 (NCPK…TPCE), 522 to 575 (GVDW…KSPK), 576 to 633 (CEAQ…QDCE), and 639 to 694 (CPGE…EACT). Cystine bridges form between cysteine 462–cysteine 504, cysteine 473–cysteine 515, and cysteine 477–cysteine 520. N-linked (GlcNAc...) asparagine glycosylation is present at asparagine 669. Disordered regions lie at residues 699–1252 (LPLT…CAKS) and 1323–1367 (GEND…PDTK). Composition is skewed to acidic residues over residues 708–720 (IEDD…EDGI) and 727–738 (LSDDEKSEDVID). Polar residues predominate over residues 768–788 (STGTTFEGSGYDSESTTDSGI). Over residues 801 to 879 (EASTDLSSST…ASASESTDVS (79 aa)) the composition is skewed to low complexity. Residues asparagine 889, asparagine 914, asparagine 917, asparagine 950, and asparagine 1064 are each glycosylated (N-linked (GlcNAc...) asparagine). The segment covering 890 to 1053 (ASDSTPESST…SDNTDITTDG (164 aa)) has biased composition (low complexity). The span at 1064-1073 (NASTEGSTEG) shows a compositional bias: polar residues. 2 stretches are compositionally biased toward low complexity: residues 1076-1091 (EDTT…TEST) and 1104-1215 (STVE…IWST). Residues 1237–1248 (SKPRKCKPKKST) show a composition bias toward basic residues. Residues 1330–1351 (PETTTVPPTTTTEETQPETTTE) show a composition bias toward low complexity. 2 N-linked (GlcNAc...) asparagine glycosylation sites follow: asparagine 1489 and asparagine 1623. 15 disulfide bridges follow: cysteine 1612–cysteine 1662, cysteine 1621–cysteine 1645, cysteine 1637–cysteine 1658, cysteine 1671–cysteine 1721, cysteine 1680–cysteine 1704, cysteine 1696–cysteine 1717, cysteine 1730–cysteine 1780, cysteine 1739–cysteine 1763, cysteine 1755–cysteine 1776, cysteine 1790–cysteine 1840, cysteine 1799–cysteine 1823, cysteine 1815–cysteine 1836, cysteine 1849–cysteine 1899, cysteine 1858–cysteine 1882, and cysteine 1874–cysteine 1895. 5 consecutive BPTI/Kunitz inhibitor domains span residues 1612–1662 (CGLP…KDTC), 1671–1721 (CLLP…QGTC), 1730–1780 (CEQP…NYNC), 1790–1840 (CALP…EDHC), and 1849–1899 (CEIP…LARC). An N-linked (GlcNAc...) asparagine glycan is attached at asparagine 1750. Residues 1902 to 1928 (KPEPTTTTPATRPQPSRQDVCDEEPAP) are disordered. Over residues 1905–1916 (PTTTTPATRPQP) the composition is skewed to low complexity. Disulfide bonds link cysteine 1922–cysteine 1972, cysteine 1931–cysteine 1955, and cysteine 1947–cysteine 1968. One can recognise a BPTI/Kunitz inhibitor 6 domain in the interval 1922-1972 (CDEEPAPGECSTWVLKWHFDRKIGACRQFYYGNCGGNGNRFETENDCQQRC). Residues 1972-2004 (CLSQEPPAPTPPRAPAPTRQPDPAPTVAQCSQP) form a disordered region. Over residues 1977 to 1995 (PPAPTPPRAPAPTRQPDPA) the composition is skewed to pro residues. 18 disulfides stabilise this stretch: cysteine 2001–cysteine 2051, cysteine 2010–cysteine 2034, cysteine 2026–cysteine 2047, cysteine 2071–cysteine 2121, cysteine 2080–cysteine 2104, cysteine 2096–cysteine 2117, cysteine 2128–cysteine 2178, cysteine 2137–cysteine 2161, cysteine 2153–cysteine 2174, cysteine 2194–cysteine 2244, cysteine 2203–cysteine 2227, cysteine 2219–cysteine 2240, cysteine 2253–cysteine 2303, cysteine 2262–cysteine 2286, cysteine 2278–cysteine 2299, cysteine 2318–cysteine 2371, cysteine 2327–cysteine 2354, and cysteine 2346–cysteine 2367. 6 BPTI/Kunitz inhibitor domains span residues 2001 to 2051 (CSQP…SARC), 2071 to 2121 (CFLA…QNEC), 2128 to 2178 (CALP…LNFC), 2194 to 2244 (CAEP…ERQC), 2253 to 2303 (CNEP…QTVC), and 2318 to 2371 (CLLP…TNQC). The N-linked (GlcNAc...) asparagine glycan is linked to asparagine 2020. Asparagine 2083 carries N-linked (GlcNAc...) asparagine glycosylation. Asparagine 2205 carries an N-linked (GlcNAc...) asparagine glycan. In terms of domain architecture, WAP spans 2452–2498 (DIYKPGECPALSANASGCARECYTDADCRGDNKCCSDGCGQLCVHPA). N-linked (GlcNAc...) asparagine glycans are attached at residues asparagine 2465, asparagine 2552, and asparagine 2625. 3 consecutive Ig-like C2-type domains span residues 2523–2607 (PKEA…REVA), 2617–2697 (PAYI…RPVS), and 2749–2840 (PTVN…ANVS). Cysteine 2543 and cysteine 2592 are disulfide-bonded. 2 disulfide bridges follow: cysteine 2640–cysteine 2687 and cysteine 2775–cysteine 2824. N-linked (GlcNAc...) asparagine glycans are attached at residues asparagine 2784 and asparagine 2838. Residues 2847-2886 (VSPECVDNPYFANCKLIVKGRYCSNPYYTQFCCRSCTLAG) enclose the PLAC domain.

It belongs to the papilin family. In terms of assembly, homooligomer; disulfide-linked. Post-translationally, N-glycosylated. In terms of processing, sulfated. During embryogenesis it first appears in the extracellular matrix during gastrulation and early mesoderm development at sites where basement membranes do not subsequently form. Later, migrating hemocytes prominently produce it together with other ECM components, in basement membranes that underlie epithelia and envelop muscles and emerging organs. At various life stages, it can be synthesized by other cells, such as those of the fat body, and it also occurs in a few, circumscribed regions of relatively amorphous ECM. Isoform E is specifically expressed in ECM of heart and proventriculus. Isoform C is a major component of transitory ECM deposit in the early embryo. Isoform F is a major component of the basement membrane during embryogenesis.

It localises to the secreted. The protein localises to the extracellular space. Its subcellular location is the extracellular matrix. It is found in the basement membrane. In terms of biological role, essential extracellular matrix (ECM) protein that influences cell rearrangements. May act by modulating metalloproteinases action during organogenesis. Able to non-competitively inhibit procollagen N-proteinase, an ADAMTS metalloproteinase. In Drosophila melanogaster (Fruit fly), this protein is Papilin (Ppn).